Consider the following 224-residue polypeptide: Large ribosomal subunit protein uL11c (224 aa).

A chloroplast-targeting transit peptide spans 1–66 (MAQPLVAAPS…SHRRLSIVAM (66 aa)). Residues Lys75 and Lys111 each carry the N6,N6,N6-trimethyllysine modification.

Component of the chloroplast large ribosomal subunit (LSU). Mature 70S chloroplast ribosomes of higher plants consist of a small (30S) and a large (50S) subunit. The 30S small subunit contains 1 molecule of ribosomal RNA (16S rRNA) and 24 different proteins. The 50S large subunit contains 3 rRNA molecules (23S, 5S and 4.5S rRNA) and 33 different proteins.

The protein resides in the plastid. It is found in the chloroplast. Its function is as follows. Component of the chloroplast ribosome (chloro-ribosome), a dedicated translation machinery responsible for the synthesis of chloroplast genome-encoded proteins, including proteins of the transcription and translation machinery and components of the photosynthetic apparatus. In Spinacia oleracea (Spinach), this protein is Large ribosomal subunit protein uL11c (rpl11).